We begin with the raw amino-acid sequence, 698 residues long: Capon-like protein (698 aa).

Positions 25 to 194 (FFHGITFQAK…SELLDVEQIS (170 aa)) constitute a PID domain. The interval 191-240 (EQISEQQLSEDGERGGGDNETPKKEHLAITPDLNHTQPQRPNHLDIMPSH) is disordered. Residues 201 to 217 (DGERGGGDNETPKKEHL) are compositionally biased toward basic and acidic residues. Coiled-coil stretches lie at residues 265–327 (RSEI…LASL), 379–484 (NQQL…LNAN), and 554–583 (LNED…GNLA). Over residues 396-423 (SQHLQNLQQQQQQQQQQQQQQTQAAPTA) the composition is skewed to low complexity. Positions 396–460 (SQHLQNLQQQ…QQQQQQQQDA (65 aa)) are disordered. The segment covering 436-447 (YPSMSALQSISN) has biased composition (polar residues). Over residues 448–458 (QLQQQQQQQQQ) the composition is skewed to low complexity. The interval 588–698 (GGSTSTRDTS…RTTWARHTTK (111 aa)) is disordered. Over residues 590 to 640 (STSTRDTSRSSSTLDSPSSPRLRSSNNNISPGSSNGNQNHNNNSNSNSSSS) the composition is skewed to low complexity. Polar residues-rich tracts occupy residues 662 to 672 (LSATPSFITRS) and 679 to 698 (NRSQ…HTTK).

As to expression, expressed at higher level in wing imaginal disk.

In terms of biological role, putative adapter protein. In Drosophila melanogaster (Fruit fly), this protein is Capon-like protein.